Here is a 134-residue protein sequence, read N- to C-terminus: Viral interleukin-8 homolog (134 aa).

A signal peptide spans 1-22 (MQALLLVLVLFIVQIYLLPGNG).

Belongs to the intercrine alpha (chemokine CxC) family. Homodimer.

The protein localises to the secreted. In terms of biological role, plays a role in the early phase of cytolytic infections presumably by recruiting host B or T-lymphocytes. The protein is Viral interleukin-8 homolog (MDV078) of Gallus gallus (Chicken).